We begin with the raw amino-acid sequence, 232 residues long: DnaJ homolog subfamily B member 8 (232 aa).

One can recognise a J domain in the interval 3–69 (NYYEVLGVQA…KKRSLYDRAG (67 aa)).

As to quaternary structure, interacts with histone deacetylases HDAC4, HDAC6, and SIRT2, HDAC activity is required for antiaggregation.

In terms of biological role, efficient suppressor of aggregation and toxicity of disease-associated polyglutamine proteins. This is DnaJ homolog subfamily B member 8 (DNAJB8) from Homo sapiens (Human).